The sequence spans 239 residues: Adapter protein MecA (239 aa).

The span at 118-128 shows a compositional bias: basic and acidic residues; it reads EQRTKEKEAQG. A disordered region spans residues 118–137; sequence EQRTKEKEAQGSKRQKSSAR.

It belongs to the MecA family. Homodimer.

In terms of biological role, enables the recognition and targeting of unfolded and aggregated proteins to the ClpC protease or to other proteins involved in proteolysis. The sequence is that of Adapter protein MecA from Staphylococcus aureus (strain Mu3 / ATCC 700698).